An 818-amino-acid chain; its full sequence is Glycerol-3-phosphate acyltransferase (818 aa).

An HXXXXD motif motif is present at residues 305-310 (HRSHMD).

The protein belongs to the GPAT/DAPAT family.

The protein localises to the cell inner membrane. The catalysed reaction is sn-glycerol 3-phosphate + an acyl-CoA = a 1-acyl-sn-glycero-3-phosphate + CoA. It participates in phospholipid metabolism; CDP-diacylglycerol biosynthesis; CDP-diacylglycerol from sn-glycerol 3-phosphate: step 1/3. This Photorhabdus laumondii subsp. laumondii (strain DSM 15139 / CIP 105565 / TT01) (Photorhabdus luminescens subsp. laumondii) protein is Glycerol-3-phosphate acyltransferase.